The sequence spans 297 residues: Cytidine deaminase (297 aa).

2 CMP/dCMP-type deaminase domains span residues Ser54–Lys174 and Leu192–Val297. Asn95 to Glu97 is a binding site for substrate. His108 lines the Zn(2+) pocket. Glu110 serves as the catalytic Proton donor. Cys135 and Cys138 together coordinate Zn(2+).

The protein belongs to the cytidine and deoxycytidylate deaminase family. Homodimer. The cofactor is Zn(2+).

The enzyme catalyses cytidine + H2O + H(+) = uridine + NH4(+). It catalyses the reaction 2'-deoxycytidine + H2O + H(+) = 2'-deoxyuridine + NH4(+). Functionally, this enzyme scavenges exogenous and endogenous cytidine and 2'-deoxycytidine for UMP synthesis. The protein is Cytidine deaminase of Actinobacillus pleuropneumoniae serotype 5b (strain L20).